We begin with the raw amino-acid sequence, 537 residues long: Myosin-binding protein H (537 aa).

Over residues 1-25 the composition is skewed to low complexity; that stretch reads MTGKTAPAAAKKAPAAKKAPAPASK. The tract at residues 1-138 is disordered; that stretch reads MTGKTAPAAA…KPKEEPPSVP (138 aa). Over residues 26-69 the composition is skewed to basic and acidic residues; it reads KAPEPAPKEKPAPTPKEGHAPTPKEEHAPPPKEEHAPPPKEEHA. Residues 87 to 104 show a composition bias toward low complexity; that stretch reads EQPAAPAAEHAPTPTHEA. Pro residues predominate over residues 112 to 124; sequence PPPAAPAEAPAPE. Residues 137–232 enclose the Fibronectin type-III 1 domain; that stretch reads VPLSLAVEEV…LEQPVLIREI (96 aa). Residues 236–324 enclose the Ig-like C2-type 1 domain; the sequence is PRIRLPRQLR…NGAEDKAILD (89 aa). The 96-residue stretch at 333–428 folds into the Fibronectin type-III 2 domain; it reads PPQNLKLVDV…AAGVAHIKKT (96 aa). Residues 444 to 528 form the Ig-like C2-type 2 domain; it reads PKFTQPLTDR…VNPLGEASVD (85 aa).

The protein belongs to the immunoglobulin superfamily. MyBP family. As to expression, skeletal muscle. Seems to be also expressed in the slow tonic ald muscle. Not detected in gizzard or heart.

Binds to myosin; probably involved in interaction with thick myofilaments in the A-band. This chain is Myosin-binding protein H (MYBPH), found in Gallus gallus (Chicken).